We begin with the raw amino-acid sequence, 125 residues long: Large ribosomal subunit protein bL12 (125 aa).

Belongs to the bacterial ribosomal protein bL12 family. Homodimer. Part of the ribosomal stalk of the 50S ribosomal subunit. Forms a multimeric L10(L12)X complex, where L10 forms an elongated spine to which 2 to 4 L12 dimers bind in a sequential fashion. Binds GTP-bound translation factors.

Its function is as follows. Forms part of the ribosomal stalk which helps the ribosome interact with GTP-bound translation factors. Is thus essential for accurate translation. The protein is Large ribosomal subunit protein bL12 of Endomicrobium trichonymphae.